The primary structure comprises 189 residues: Hypoxanthine/guanine phosphoribosyltransferase (189 aa).

This sequence belongs to the purine/pyrimidine phosphoribosyltransferase family. Archaeal HPRT subfamily. Homodimer.

It localises to the cytoplasm. The catalysed reaction is IMP + diphosphate = hypoxanthine + 5-phospho-alpha-D-ribose 1-diphosphate. It carries out the reaction GMP + diphosphate = guanine + 5-phospho-alpha-D-ribose 1-diphosphate. It participates in purine metabolism; IMP biosynthesis via salvage pathway; IMP from hypoxanthine: step 1/1. Its function is as follows. Catalyzes a salvage reaction resulting in the formation of IMP that is energically less costly than de novo synthesis. The polypeptide is Hypoxanthine/guanine phosphoribosyltransferase (Methanosarcina mazei (strain ATCC BAA-159 / DSM 3647 / Goe1 / Go1 / JCM 11833 / OCM 88) (Methanosarcina frisia)).